The chain runs to 118 residues: Holo-[acyl-carrier-protein] synthase (118 aa).

Mg(2+) is bound by residues Asp-8 and Glu-58.

It belongs to the P-Pant transferase superfamily. AcpS family. Mg(2+) serves as cofactor.

It localises to the cytoplasm. It catalyses the reaction apo-[ACP] + CoA = holo-[ACP] + adenosine 3',5'-bisphosphate + H(+). Transfers the 4'-phosphopantetheine moiety from coenzyme A to a Ser of acyl-carrier-protein. The chain is Holo-[acyl-carrier-protein] synthase from Lactobacillus helveticus (strain DPC 4571).